A 92-amino-acid polypeptide reads, in one-letter code: Small ribosomal subunit protein uS19 (92 aa).

It belongs to the universal ribosomal protein uS19 family.

Protein S19 forms a complex with S13 that binds strongly to the 16S ribosomal RNA. This is Small ribosomal subunit protein uS19 from Listeria innocua serovar 6a (strain ATCC BAA-680 / CLIP 11262).